A 488-amino-acid polypeptide reads, in one-letter code: Prostaglandin E2 receptor EP4 subtype (488 aa).

At 1-19 (MSTPGVNSSASLSPDRLNS) the chain is on the extracellular side. N-linked (GlcNAc...) asparagine glycosylation occurs at Asn-7. Residues 20–43 (PVTIPAVMFIFGVVGNLVAIVVLC) form a helical membrane-spanning segment. The Cytoplasmic segment spans residues 44–55 (KSRKEQKETTFY). A helical membrane pass occupies residues 56-79 (TLVCGLAVTDLLGTLLVSPVTIAT). The Extracellular segment spans residues 80–96 (YMKGQWPGGQPLCEYST). Cys-92 and Cys-170 form a disulfide bridge. A helical membrane pass occupies residues 97–115 (FILLFFSLSGLSIICAMSV). Residues 116–135 (ERYLAINHAYFYSHYVDKRL) are Cytoplasmic-facing. Residues 136-160 (AGLTLFAVYASNVLFCALPNMGLGS) traverse the membrane as a helical segment. The Extracellular portion of the chain corresponds to 161 to 184 (SRLQYPDTWCFIDWTTNVTAHAAY). The helical transmembrane segment at 185–211 (SYMYAGFSSFLILATVLCNVLVCGALL) threads the bilayer. Residues 212–267 (RMHRQFMRRTSLGTEQHHAAAAASVASRGHPAASPALPRLSDFRRRRSFRRIAGAE) are Cytoplasmic-facing. The helical transmembrane segment at 268–295 (IQMVILLIATSLVVLICSIPLVVRVFVN) threads the bilayer. The Extracellular segment spans residues 296 to 312 (QLYQPSLEREVSKNPDL). A helical membrane pass occupies residues 313 to 332 (QAIRIASVNPILDPWIYILL). The Cytoplasmic portion of the chain corresponds to 333 to 488 (RKTVLSKAIE…ETLNLSEKCI (156 aa)). Positions 356 to 376 (RERSGQHCSDSQRTSSAMSGH) are disordered. Positions 361 to 376 (QHCSDSQRTSSAMSGH) are enriched in polar residues. A phosphoserine mark is found at Ser-374, Ser-377, Ser-379, and Ser-382. Residues 437–449 (SETSDSSQGQDSE) are compositionally biased toward polar residues. Residues 437–475 (SETSDSSQGQDSESVLLVDEAGGSGRAGPAPKGSSLQVT) are disordered.

This sequence belongs to the G-protein coupled receptor 1 family. As to quaternary structure, interacts with FEM1A. Post-translationally, phosphorylation mediates agonist-mediated desensitization by promoting cytoplasmic retention. As to expression, high in intestine and in peripheral blood mononuclear cells; low in lung, kidney, thymus, uterus, vasculature and brain. Not found in liver, heart, retina oe skeletal muscle.

Its subcellular location is the cell membrane. Receptor for prostaglandin E2 (PGE2). The activity of this receptor is mediated by G(s) proteins that stimulate adenylate cyclase. Has a relaxing effect on smooth muscle. May play an important role in regulating renal hemodynamics, intestinal epithelial transport, adrenal aldosterone secretion, and uterine function. The chain is Prostaglandin E2 receptor EP4 subtype (PTGER4) from Homo sapiens (Human).